The chain runs to 297 residues: GTPase Era (297 aa).

The region spanning 3–171 (KSGFVSIVGR…IKVIQNYLEE (169 aa)) is the Era-type G domain. Residues 11 to 18 (GRPNVGKS) form a G1 region. 11-18 (GRPNVGKS) is a binding site for GTP. Positions 37–41 (QTTRN) are G2. The segment at 58 to 61 (DTPG) is G3. Residues 58 to 62 (DTPGI) and 120 to 123 (NKID) each bind GTP. A G4 region spans residues 120–123 (NKID). The segment at 150–152 (ISA) is G5. The KH type-2 domain occupies 194–280 (IREKVLHYLN…NLQLWVKVKE (87 aa)).

Belongs to the TRAFAC class TrmE-Era-EngA-EngB-Septin-like GTPase superfamily. Era GTPase family. As to quaternary structure, monomer.

The protein localises to the cytoplasm. It localises to the cell membrane. Functionally, an essential GTPase that binds both GDP and GTP, with rapid nucleotide exchange. Plays a role in 16S rRNA processing and 30S ribosomal subunit biogenesis and possibly also in cell cycle regulation and energy metabolism. The protein is GTPase Era of Clostridioides difficile (strain 630) (Peptoclostridium difficile).